A 352-amino-acid polypeptide reads, in one-letter code: C-X-C chemokine receptor type 4 (352 aa).

Residues 1–21 are important for chemokine binding and signaling; the sequence is MEGISIYTSDNYTEEMGSGDY. At 1–38 the chain is on the extracellular side; that stretch reads MEGISIYTSDNYTEEMGSGDYDSIKEPCFREENAHFNR. Position 7 is a sulfotyrosine (Tyr7). N-linked (GlcNAc...) asparagine glycosylation is present at Asn11. A Sulfotyrosine modification is found at Tyr12. An O-linked (Xyl...) (chondroitin sulfate) serine glycan is attached at Ser18. Tyr21 is modified (sulfotyrosine). 2 disulfide bridges follow: Cys28–Cys274 and Cys109–Cys186. A helical transmembrane segment spans residues 39-63; it reads IFLPTIYSIIFLTGIVGNGLVILVM. The Cytoplasmic portion of the chain corresponds to 64-77; it reads GYQKKLRSMTDKYR. Residues 78–99 form a helical membrane-spanning segment; that stretch reads LHLSVADLLFVITLPFWAVDAV. Residues 94–97 are chemokine binding; that stretch reads WAVD. Residues 100–110 lie on the Extracellular side of the membrane; the sequence is ANWYFGNFLCK. Residues 111 to 130 form a helical membrane-spanning segment; that stretch reads AVHVIYTVNLYSSVLILAFI. The tract at residues 113–117 is chemokine binding; that stretch reads HVIYT. Topologically, residues 131–154 are cytoplasmic; it reads SLDRYLAIVHATNSQKPRKLLAEK. The short motif at 133 to 135 is the Important for signaling element; sequence DRY. The involved in dimerization; when bound to chemokine stretch occupies residues 135–147; the sequence is YLAIVHATNSQKP. Residues 155-174 traverse the membrane as a helical segment; sequence VVYVGVWIPALLLTIPDFIF. The Extracellular portion of the chain corresponds to 175-195; sequence ASVSEADDRYICDRFYPNDLW. The segment at 186 to 190 is chemokine binding, important for signaling; sequence CDRFY. The segment at 191-210 is involved in dimerization; the sequence is PNDLWVVVFQFQHIMVGLIL. A helical transmembrane segment spans residues 196 to 216; that stretch reads VVVFQFQHIMVGLILPGIVIL. The Cytoplasmic segment spans residues 217–241; sequence SCYCIIISKLSHSKGHQKRKALKTT. The chain crosses the membrane as a helical span at residues 242–261; it reads VILILAFFACWLPYYIGISI. Residues 262–282 lie on the Extracellular side of the membrane; it reads DSFILLEIIKQGCEFENTVHK. The tract at residues 266–268 is involved in dimerization; that stretch reads LLE. Residues 283 to 302 traverse the membrane as a helical segment; sequence WISITEALAFFHCCLNPILY. The Cytoplasmic segment spans residues 303 to 352; the sequence is AFLGAKFKTSAQHALTSVSRGSSLKILSKGKRGGHSSVSTESESSSFHSS. A phosphoserine mark is found at Ser319 and Ser321. 2 positions are modified to phosphoserine; by PKC and GRK6: Ser324 and Ser325. Positions 329-352 are disordered; the sequence is LSKGKRGGHSSVSTESESSSFHSS. At Ser330 the chain carries Phosphoserine; by GRK6. Lys331 participates in a covalent cross-link: Glycyl lysine isopeptide (Lys-Gly) (interchain with G-Cter in ubiquitin). The span at 337–352 shows a compositional bias: low complexity; sequence HSSVSTESESSSFHSS. Ser339 bears the Phosphoserine; by GRK6 mark. 2 positions are modified to phosphoserine: Ser348 and Ser351.

It belongs to the G-protein coupled receptor 1 family. Monomer. Can form homodimers. Interacts with CD164. Interacts with ARRB2; the interaction is dependent on the C-terminal phosphorylation of CXCR4 and allows activation of MAPK1 and MAPK3. Interacts with ARR3; the interaction is dependent on the C-terminal phosphorylation of CXCR4 and modulates calcium mobilization. Interacts with RNF113A; the interaction, enhanced by CXCL12, promotes CXCR4 ubiquitination and subsequent degradation. Interacts (via the cytoplasmic C-terminal) with ITCH (via the WW domains I and II); the interaction, enhanced by CXCL12, promotes CXCR4 ubiquitination and leads to its degradation. Interacts with extracellular ubiquitin. Interacts with DBN1; this interaction is enhanced by antigenic stimulation. Following LPS binding, may form a complex with GDF5, HSP90AA1 and HSPA8. Post-translationally, phosphorylated on agonist stimulation. Rapidly phosphorylated on serine and threonine residues in the C-terminal. Phosphorylation at Ser-324 and Ser-325 leads to recruitment of ITCH, ubiquitination and protein degradation. Ubiquitinated after ligand binding, leading to its degradation. Ubiquitinated by ITCH at the cell membrane on agonist stimulation. The ubiquitin-dependent mechanism, endosomal sorting complex required for transport (ESCRT), then targets CXCR4 for lysosomal degradation. This process is dependent also on prior Ser-/Thr-phosphorylation in the C-terminal of CXCR4. Also binding of ARRB1 to STAM negatively regulates CXCR4 sorting to lysosomes though modulating ubiquitination of SFR5S. In terms of processing, sulfation is required for efficient binding of CXCL12/SDF-1alpha and promotes its dimerization. Post-translationally, O- and N-glycosylated. N-glycosylation can mask coreceptor function. The O-glycosylation chondroitin sulfate attachment does not affect interaction with CXCL12/SDF-1alpha nor its coreceptor activity.

The protein resides in the cell membrane. It is found in the cell junction. The protein localises to the early endosome. It localises to the late endosome. Its subcellular location is the lysosome. Functionally, receptor for the C-X-C chemokine CXCL12/SDF-1 that transduces a signal by increasing intracellular calcium ion levels and enhancing MAPK1/MAPK3 activation. Involved in the AKT signaling cascade. Plays a role in regulation of cell migration, e.g. during wound healing. Acts as a receptor for extracellular ubiquitin; leading to enhanced intracellular calcium ions and reduced cellular cAMP levels. Binds bacterial lipopolysaccharide (LPS) et mediates LPS-induced inflammatory response, including TNF secretion by monocytes. Involved in hematopoiesis and in cardiac ventricular septum formation. Also plays an essential role in vascularization of the gastrointestinal tract, probably by regulating vascular branching and/or remodeling processes in endothelial cells. Involved in cerebellar development. In the CNS, could mediate hippocampal-neuron survival. This is C-X-C chemokine receptor type 4 (CXCR4) from Macaca fascicularis (Crab-eating macaque).